We begin with the raw amino-acid sequence, 513 residues long: Tyrosine-protein phosphatase non-receptor type substrate 1 (513 aa).

The signal sequence occupies residues 1 to 31 (MEPAGPAPGRLGPLLLCLLLSASCFCTGATG). In terms of domain architecture, Ig-like V-type spans 32–137 (KELKVTQPEK…SSEPDTEIQS (106 aa)). At 32–373 (KELKVTQPEK…PDNNATHNWN (342 aa)) the chain is on the extracellular side. Residues Asn54, Asn92, Asn168, Asn180, Asn205, Asn209, Asn246, Asn271, Asn293, Asn302, Asn312, Asn320, Asn345, and Asn367 are each glycosylated (N-linked (GlcNAc...) asparagine). An intrachain disulfide couples Cys55 to Cys121. 2 Ig-like C1-type domains span residues 149 to 248 (PSPP…ANLS) and 255 to 343 (PTVK…PAIT). Cys171 and Cys229 are disulfide-bonded. A disulfide bridge links Cys274 with Cys332. Residues 374 to 394 (VFIGVGVACALLVVLLMAALY) form a helical membrane-spanning segment. The Cytoplasmic portion of the chain corresponds to 395–511 (LLRIKQKKAK…FSEYASVQVQ (117 aa)). Residue Tyr440 is modified to Phosphotyrosine; by Tyr-kinases. Residues 440–443 (YADL) carry the SH2-binding motif. The tract at residues 444-513 (NLPKEKKPAP…EYASVQVQRK (70 aa)) is disordered. The SH3-binding motif lies at 450–455 (KPAPRA). Residues Tyr464, Tyr481, and Tyr505 each carry the phosphotyrosine; by Tyr-kinases modification. Short sequence motifs (SH2-binding) lie at residues 464–467 (YASI), 481–484 (YADL), and 505–508 (YASV). A compositionally biased stretch (polar residues) spans 504-513 (EYASVQVQRK).

As to quaternary structure, binds PTPN11 when tyrosine-phosphorylated, except in macrophages, where it primarily binds PTPN6. Binds GRB2 vitro. Binds FGR. Binds JAK2 irrespective of its phosphorylation status and forms a stable complex. Binds SCAP1 and/or SCAP2. The resulting complex recruits FYB1. Binds PTK2B. Interacts with TRIM2. Post-translationally, N-glycosylated. Phosphorylated on tyrosine residues. In terms of tissue distribution, highly expressed in cerebral cortex, brain, spinal cord, cerebellum and spleen, and at much lower levels in kidney, thymus, heart, lung and liver. Within the cerebellum, highly expressed throughout the molecular layer, and in synaptic glomeruli in the granule cell layer. Detected in neurons of the hippocampus and dentate gyrus, and in olfactory bulb. Not detected in Purkinje cells. Highly expressed in the plexiform layers, optic fiber layer and the outer segments of the photoreceptor layer in the retina. Highly expressed in macrophages. Isoform 3 is detected at very low levels in all tissues tested.

The protein localises to the membrane. Its function is as follows. Immunoglobulin-like cell surface receptor for CD47. Acts as a docking protein and induces translocation of PTPN6, PTPN11 and other binding partners from the cytosol to the plasma membrane. Supports adhesion of cerebellar neurons, neurite outgrowth and glial cell attachment. May play a key role in intracellular signaling during synaptogenesis and in synaptic function. Involved in the negative regulation of receptor tyrosine kinase-coupled cellular responses induced by cell adhesion, growth factors or insulin. Mediates negative regulation of phagocytosis, mast cell activation and dendritic cell activation. CD47 binding prevents maturation of immature dendritic cells and inhibits cytokine production by mature dendritic cells. Plays a role in antiviral immunity and limits new world arenavirus infection by decreasing virus internalization. Receptor for THBS1. Interaction with THBS1 stimulates phosphorylation of SIRPA. In response to THBS1, involved in ROS signaling in non-phagocytic cells, stimulating NADPH oxidase-derived ROS production. This chain is Tyrosine-protein phosphatase non-receptor type substrate 1 (Sirpa), found in Mus musculus (Mouse).